Consider the following 200-residue polypeptide: Probable GTP-binding protein EngB (200 aa).

The region spanning 24 to 198 (EGMEVAFAGR…QAQLDEWLGI (175 aa)) is the EngB-type G domain. Residues 32-39 (GRSNVGKS), 59-63 (GRTQM), 77-80 (DLPG), 144-147 (TKSD), and 177-179 (FSA) each bind GTP. Mg(2+) is bound by residues Ser-39 and Thr-61.

The protein belongs to the TRAFAC class TrmE-Era-EngA-EngB-Septin-like GTPase superfamily. EngB GTPase family. Mg(2+) is required as a cofactor.

Its function is as follows. Necessary for normal cell division and for the maintenance of normal septation. The protein is Probable GTP-binding protein EngB of Nitrosococcus oceani (strain ATCC 19707 / BCRC 17464 / JCM 30415 / NCIMB 11848 / C-107).